Consider the following 628-residue polypeptide: MAELGELKHMVMSFRVSELQVLLGFAGRNKSGRKHELLAKALHLLKSSCAPSVQMKIKELYRRRFPRKTLGPSDLSLLSLPPGTSPVGSPSPLASIPPTLLTPGTLLGPKREVDMHPPLPQPVHPDVTMKPLPFYEVYGELIRPTTLASTSSQRFEEAHFTFALTPQQLQQILTSREVLPGAKCDYTIQVQLRFCLCETSCPQEDYFPPNLFVKVNGKLCPLPGYLPPTKNGAEPKRPSRPINITPLARLSATVPNTIVVNWSSEFGRNYSLSVYLVRQLTAGTLLQKLRAKGIRNPDHSRALIKEKLTADPDSEVATTSLRVSLMCPLGKMRLTVPCRALTCAHLQSFDAALYLQMNEKKPTWTCPVCDKKAPYESLIIDGLFMEILNSCSDCDEIQFMEDGSWCPMKPKKEASEVCPPPGYGLDGLQYSPVQEGNQSENKKRVEVIDLTIESSSDEEDLPPTKKHCPVTSAAIPALPGSKGALTSGHQPSSVLRSPAMGTLGSDFLSSLPLHEYPPAFPLGADIQGLDLFSFLQTESQHYSPSVITSLDEQDTLGHFFQFRGTPPHFLGPLAPTLGSSHRSATPAPAPGRVSSIVAPGSSLREGHGGPLPSGPSLTGCRSDVISLD.

Residues 1–200 (MAELGELKHM…QLRFCLCETS (200 aa)) are interaction with CCAR2. One can recognise an SAP domain in the interval 11–45 (VMSFRVSELQVLLGFAGRNKSGRKHELLAKALHLL). Positions 19–23 (LQVLL) match the LXXLL motif motif. Residues Lys-46 and Lys-56 each participate in a glycyl lysine isopeptide (Lys-Gly) (interchain with G-Cter in SUMO2) cross-link. The segment at 72-95 (PSDLSLLSLPPGTSPVGSPSPLAS) is disordered. One can recognise a PINIT domain in the interval 115–280 (MHPPLPQPVH…SLSVYLVRQL (166 aa)). Glycyl lysine isopeptide (Lys-Gly) (interchain with G-Cter in SUMO2) cross-links involve residues Lys-230 and Lys-307. The SP-RING-type zinc finger occupies 312 to 393 (PDSEVATTSL…FMEILNSCSD (82 aa)). Zn(2+) contacts are provided by Cys-343, His-345, Cys-366, and Cys-369. Positions 450-460 (LTIESSSDEED) are SUMO1-binding. Residues Lys-466 and Lys-482 each participate in a glycyl lysine isopeptide (Lys-Gly) (interchain with G-Cter in SUMO2) cross-link. Residues 573-618 (LAPTLGSSHRSATPAPAPGRVSSIVAPGSSLREGHGGPLPSGPSLT) form a disordered region.

The protein belongs to the PIAS family. Binds SUMO1 and UBE2I. Interacts with AR, BCL11A, GFI1, HMGA2, IRF1, MITF, NCOA2, as well as with STAT3, after treatment with IL6, CNTF or OSM and with STAT5, after PRL stimulation. Interacts with PLAG1. Interacts with ZFHX3. Interacts with MTA1. Interacts with CCAR2 (via N-terminus). Interacts with TRIM8. Interacts with PRDM1. Post-translationally, sumoylated. Widely expressed, with highest levels in lung, kidney and spleen.

Its subcellular location is the cytoplasm. The protein resides in the nucleus. It localises to the nucleus speckle. Its pathway is protein modification; protein sumoylation. Its function is as follows. Functions as an E3-type small ubiquitin-like modifier (SUMO) ligase, stabilizing the interaction between UBE2I and the substrate, and as a SUMO-tethering factor. Plays a crucial role as a transcriptional coregulation in various cellular pathways, including the STAT pathway and the steroid hormone signaling pathway. The effects of this transcriptional coregulation, transactivation or silencing, may vary depending upon the biological context. Enhances the sumoylation of MTA1 and may participate in its paralog-selective sumoylation. Sumoylates CCAR2 which promotes its interaction with SIRT1. Diminishes the sumoylation of ZFHX3 by preventing the colocalization of ZFHX3 with SUMO1 in the nucleus. The sequence is that of E3 SUMO-protein ligase PIAS3 (Pias3) from Rattus norvegicus (Rat).